Here is a 472-residue protein sequence, read N- to C-terminus: ESX-3 secretion system protein EccD3 (472 aa).

Transmembrane regions (helical) follow at residues 121 to 141 (WGIA…ALLA), 155 to 175 (LAGL…GLLI), 183 to 203 (GIAL…LAVP), 211 to 231 (VLLG…IPSA), 236 to 256 (VVAF…AAGA), 258 to 278 (LLWQ…ALLV), 327 to 347 (QSGF…AIAV), 349 to 369 (PEAL…AATL), 381 to 401 (AWLL…YTAT), 405 to 425 (VAAF…VVVA), and 450 to 470 (GLDV…AWVL).

Belongs to the EccD/Snm4 family. Part of the ESX-3 / type VII secretion system (T7SS), which is composed of cytosolic and membrane components. The ESX-3 membrane complex is composed of EccB3, EccC3, EccD3 and EccE3.

It is found in the cell inner membrane. In terms of biological role, part of the ESX-3 specialized secretion system, which is important for iron and zinc uptake or homeostasis. This Mycobacterium tuberculosis (strain CDC 1551 / Oshkosh) protein is ESX-3 secretion system protein EccD3.